Reading from the N-terminus, the 297-residue chain is Transmembrane protein 178A (297 aa).

The N-terminal stretch at 1 to 25 (MEPRALVTALSLGLSLCSLGLLVTA) is a signal peptide. The Extracellular portion of the chain corresponds to 26–179 (IFTDHWYETD…LLHLRRITAG (154 aa)). Residues 41-57 (ESCERSRAGADPPDQKN) are compositionally biased toward basic and acidic residues. The interval 41-86 (ESCERSRAGADPPDQKNRLMPLSHLPLRDSPPLGRRLLPGGPGRSD) is disordered. The span at 68–79 (RDSPPLGRRLLP) shows a compositional bias: low complexity. The N-linked (GlcNAc...) asparagine glycan is linked to Asn-158. Residues 180 to 200 (FLGMAVAVLLCGCIVATVSFF) traverse the membrane as a helical segment. Residues 201–208 (WEESLTQH) lie on the Cytoplasmic side of the membrane. A helical transmembrane segment spans residues 209 to 229 (VAGLLFLMTGIFCTISLCTYA). Over 230–257 (ASVSYDLNRVPKLIYSLPHDVEHGYSWS) the chain is Extracellular. A helical membrane pass occupies residues 258-278 (IFCAWCSLGFIVAAGGLCIAY). The Cytoplasmic portion of the chain corresponds to 279–297 (PFISRTKIAHLKSGRDSTV).

Belongs to the TMEM178 family. As to quaternary structure, interacts with STIM1.

The protein localises to the endoplasmic reticulum membrane. Its function is as follows. Acts as a negative regulator of osteoclast differentiation in basal and inflammatory conditions by regulating TNFSF11-induced Ca (2+) fluxes, thereby controlling the induction of NFATC1. The protein is Transmembrane protein 178A (Tmem178a) of Rattus norvegicus (Rat).